Reading from the N-terminus, the 219-residue chain is MKNWTDVIGKEKEQPYFQHALQQVHLARANGKTIYPPQEEVFNAFKYTAFEDVKVVILGQDPYHGANQAHGLAFSVKPEVAIPPSLLNMYKELTQDISGFQMPSNGYLVKWAEQGVLLLNTVLTVERGMAHSHANLGWERFTDKVIAVLNEHREKLVFLLWGSHAQKKGQIIDRTRHLVLTAPHPSPLSAHRGFFGCHHFSKTNSYLESNGMKPIDWQI.

Asp61 functions as the Proton acceptor in the catalytic mechanism.

The protein belongs to the uracil-DNA glycosylase (UDG) superfamily. UNG family.

Its subcellular location is the cytoplasm. The catalysed reaction is Hydrolyzes single-stranded DNA or mismatched double-stranded DNA and polynucleotides, releasing free uracil.. Its function is as follows. Excises uracil residues from the DNA which can arise as a result of misincorporation of dUMP residues by DNA polymerase or due to deamination of cytosine. This chain is Uracil-DNA glycosylase, found in Haemophilus influenzae (strain 86-028NP).